The sequence spans 349 residues: Peroxidase 23 (349 aa).

The N-terminal stretch at 1-29 is a signal peptide; that stretch reads MGFSSSLSCSAMGALIVGCLLLQASNSNA. Position 30 is a pyrrolidone carboxylic acid (Gln-30). 4 disulfide bridges follow: Cys-40/Cys-120, Cys-73/Cys-78, Cys-126/Cys-329, and Cys-206/Cys-238. His-71 serves as the catalytic Proton acceptor. Ca(2+) is bound by residues Asp-72, Val-75, Gly-77, Asp-79, and Ser-81. The N-linked (GlcNAc...) asparagine glycan is linked to Asn-86. Pro-168 is a binding site for substrate. His-199 is a binding site for heme b. Residue Thr-200 coordinates Ca(2+). Asn-217 and Asn-243 each carry an N-linked (GlcNAc...) asparagine glycan. Ca(2+)-binding residues include Asp-251, Thr-254, and Asp-259.

The protein belongs to the peroxidase family. Classical plant (class III) peroxidase subfamily. Requires heme b as cofactor. It depends on Ca(2+) as a cofactor.

The protein resides in the secreted. It localises to the vacuole. The enzyme catalyses 2 a phenolic donor + H2O2 = 2 a phenolic radical donor + 2 H2O. Functionally, removal of H(2)O(2), oxidation of toxic reductants, biosynthesis and degradation of lignin, suberization, auxin catabolism, response to environmental stresses such as wounding, pathogen attack and oxidative stress. These functions might be dependent on each isozyme/isoform in each plant tissue. This chain is Peroxidase 23 (PER23), found in Arabidopsis thaliana (Mouse-ear cress).